Consider the following 636-residue polypeptide: Chaperone protein DnaK (636 aa).

The disordered stretch occupies residues 579–636 (ELYKNAAPPPGADGQQGADGQQGADGQQGADGQQGADGQQGADGQTTESSSNDETKTN). Positions 590–623 (ADGQQGADGQQGADGQQGADGQQGADGQQGADGQ) are enriched in low complexity.

Belongs to the heat shock protein 70 family.

In terms of biological role, acts as a chaperone. The sequence is that of Chaperone protein DnaK from Nitrosopumilus maritimus (strain SCM1).